The sequence spans 387 residues: 3-ketoacyl-CoA thiolase (387 aa).

Cysteine 91 serves as the catalytic Acyl-thioester intermediate. Active-site proton acceptor residues include histidine 343 and cysteine 373.

This sequence belongs to the thiolase-like superfamily. Thiolase family. Heterotetramer of two alpha chains (FadB) and two beta chains (FadA).

It is found in the cytoplasm. The enzyme catalyses an acyl-CoA + acetyl-CoA = a 3-oxoacyl-CoA + CoA. The protein operates within lipid metabolism; fatty acid beta-oxidation. In terms of biological role, catalyzes the final step of fatty acid oxidation in which acetyl-CoA is released and the CoA ester of a fatty acid two carbons shorter is formed. This is 3-ketoacyl-CoA thiolase from Aeromonas hydrophila subsp. hydrophila (strain ATCC 7966 / DSM 30187 / BCRC 13018 / CCUG 14551 / JCM 1027 / KCTC 2358 / NCIMB 9240 / NCTC 8049).